An 801-amino-acid chain; its full sequence is Protocadherin beta-8 (801 aa).

Positions 1 to 29 (MEASGKLICRQRQVLFSFLLLGLSLAGAA) are cleaved as a signal peptide. Residues 30–691 (EPRSYSVVEE…GQADSLTVYL (662 aa)) are Extracellular-facing. 5 Cadherin domains span residues 36 to 134 (VVEE…SPVF), 139 to 243 (MLVK…APEF), 248 to 348 (YRVQ…APEV), 353 to 452 (FTSP…APAF), and 457 to 562 (YTLF…SPFV). C97 and C103 are joined by a disulfide. 2 N-linked (GlcNAc...) asparagine glycosylation sites follow: N419 and N437. N568 carries an N-linked (GlcNAc...) asparagine glycan. The Cadherin 6 domain maps to 569–672 (SSAPCTELVP…LVDGFSQPYL (104 aa)). A helical membrane pass occupies residues 692-710 (VVALASVSSLFLFSVLLFV). The Cytoplasmic segment spans residues 711-801 (AVRLCRRSRA…NGFGFSLQLK (91 aa)).

As to quaternary structure, forms homodimers in trans (molecules expressed by two different cells). Forms promiscuous heterodimers in cis (at the plasma membrane of the same cell) with other protocadherins.

Its subcellular location is the cell membrane. Calcium-dependent cell-adhesion protein involved in cells self-recognition and non-self discrimination. Thereby, it is involved in the establishment and maintenance of specific neuronal connections in the brain. This chain is Protocadherin beta-8, found in Pan troglodytes (Chimpanzee).